The primary structure comprises 99 residues: Signal recognition particle 19 kDa protein (99 aa).

The protein belongs to the SRP19 family. As to quaternary structure, part of the signal recognition particle protein translocation system, which is composed of SRP and FtsY. Archaeal SRP consists of a 7S RNA molecule of 300 nucleotides and two protein subunits: SRP54 and SRP19.

Its subcellular location is the cytoplasm. In terms of biological role, involved in targeting and insertion of nascent membrane proteins into the cytoplasmic membrane. Binds directly to 7S RNA and mediates binding of the 54 kDa subunit of the SRP. This Pyrococcus abyssi (strain GE5 / Orsay) protein is Signal recognition particle 19 kDa protein.